We begin with the raw amino-acid sequence, 363 residues long: Putative C-&gt;U-editing enzyme APOBEC-4 (363 aa).

One can recognise a CMP/dCMP-type deaminase domain in the interval 61 to 177; that stretch reads PQTKHLTFYE…AWNREALRSL (117 aa). His93 provides a ligand contact to Zn(2+). Residue Glu95 is the Proton donor of the active site. 2 residues coordinate Zn(2+): Cys127 and Cys134.

Belongs to the cytidine and deoxycytidylate deaminase family. It depends on Zn(2+) as a cofactor.

Functionally, putative C to U editing enzyme whose physiological substrate is not yet known. The protein is Putative C-&gt;U-editing enzyme APOBEC-4 (APOBEC4) of Macaca fascicularis (Crab-eating macaque).